A 243-amino-acid polypeptide reads, in one-letter code: Orotidine 5'-phosphate decarboxylase (243 aa).

Substrate contacts are provided by residues Asp18, Lys39, 66–75 (DLKFHDIPAT), Thr130, Arg192, Gln201, Gly221, and Arg222. Catalysis depends on Lys68, which acts as the Proton donor.

It belongs to the OMP decarboxylase family. Type 1 subfamily. Homodimer.

The enzyme catalyses orotidine 5'-phosphate + H(+) = UMP + CO2. It participates in pyrimidine metabolism; UMP biosynthesis via de novo pathway; UMP from orotate: step 2/2. Functionally, catalyzes the decarboxylation of orotidine 5'-monophosphate (OMP) to uridine 5'-monophosphate (UMP). In Synechococcus sp. (strain CC9902), this protein is Orotidine 5'-phosphate decarboxylase.